The primary structure comprises 298 residues: HTH-type transcriptional regulator YhaJ (298 aa).

One can recognise an HTH lysR-type domain in the interval 7-64 (LTLEALRVMDAIDRRGSFAAAADELGRVPSALSYTMQKLEEELDVVLFDRSGHRTKFT). Residues 24-43 (FAAAADELGRVPSALSYTMQ) constitute a DNA-binding region (H-T-H motif).

Belongs to the LysR transcriptional regulatory family.

Its function is as follows. Positive regulator partially required for expression of genes in the locus of effacement (LEE) large pathogenicity island (PAI). Also partially responsible for expression of neighboring gene dlsT (yhaO) during late exponential growth. Binds to DNA of promoter 1 in LEE and DNA from the dlsT promoter region. The protein is HTH-type transcriptional regulator YhaJ (yhaJ) of Escherichia coli O157:H7.